The sequence spans 116 residues: Non-specific lipid-transfer protein 8 (116 aa).

The N-terminal stretch at 1–24 is a signal peptide; that stretch reads MNVLKCLAIISVLGIFFIPRYSES. 4 disulfide bridges follow: Cys-28/Cys-76, Cys-38/Cys-53, Cys-54/Cys-98, and Cys-74/Cys-112.

It belongs to the plant LTP family.

Plant non-specific lipid-transfer proteins transfer phospholipids as well as galactolipids across membranes. May play a role in wax or cutin deposition in the cell walls of expanding epidermal cells and certain secretory tissues. The sequence is that of Non-specific lipid-transfer protein 8 (LTP8) from Arabidopsis thaliana (Mouse-ear cress).